Reading from the N-terminus, the 536-residue chain is Cytochrome P450 monooxygenase fscF (536 aa).

The helical transmembrane segment at 9–29 (VSWLCALFTAIALYCIAVAFY) threads the bilayer. Position 464 (cysteine 464) interacts with heme.

It belongs to the cytochrome P450 family. It depends on heme as a cofactor.

Its subcellular location is the membrane. It functions in the pathway secondary metabolite biosynthesis. Its function is as follows. Cytochrome P450 monooxygenase; part of the fragmented gene cluster that mediates the biosynthesis of fusarochromene, a tryptophan-derived metabolite closely related to a group of mycotoxins including fusarochromanone. Within the pathway, fscF catalyzes the epoxidation of desacetylfusarochromene which opens the way to the production of fusarochromanones. The first step of the pathway is the epimerization of L-tryptophan to D-tryptophan in the presence of the NRPS-like tryptophan epimerase fscC. D-tryptophan is subsequently hydroxylated by the tryptophan 6-hydroxylase fscE to yield 6-hydroxytryptophan. The pyrrole ring undergoes cleavaged by the tryptophan 2,3-dioxygenase fscD and is finally converted to 4-hydroxykyrunenine by the hydrolase fscH. The NRPS-like oxidoreductase fscA reduces the carboxyl group to primary alcohol and the DMATS-type prenyltransferase fscG performs prenylation, followed by the formation of a chromene ring catalyzed by the oxidoreductase fscI, which leads to desacetylfusarochromene. Epoxidation by fscF and rearrangement reactions of chromene double bonds convert compound desacetylfusarochromene to fusarochromanones. Although specific acetyltransferases were not found near the fsc gene cluster, several predicted enzymes containing the N-acetyltransferase superfamily domain are present in the genome of F.equiseti. These predicted enzymes may have the potential to convert desacetylfusarochromene to fusarochromene. This chain is Cytochrome P450 monooxygenase fscF, found in Fusarium equiseti (Fusarium scirpi).